The following is a 444-amino-acid chain: Probable D-serine dehydratase (444 aa).

Lys-110 carries the post-translational modification N6-(pyridoxal phosphate)lysine.

This sequence belongs to the serine/threonine dehydratase family. DsdA subfamily. Requires pyridoxal 5'-phosphate as cofactor.

The enzyme catalyses D-serine = pyruvate + NH4(+). In Burkholderia thailandensis (strain ATCC 700388 / DSM 13276 / CCUG 48851 / CIP 106301 / E264), this protein is Probable D-serine dehydratase.